Here is a 432-residue protein sequence, read N- to C-terminus: Glutamate-1-semialdehyde 2,1-aminomutase (432 aa).

K265 carries the post-translational modification N6-(pyridoxal phosphate)lysine.

It belongs to the class-III pyridoxal-phosphate-dependent aminotransferase family. HemL subfamily. In terms of assembly, homodimer. It depends on pyridoxal 5'-phosphate as a cofactor.

It is found in the cytoplasm. It catalyses the reaction (S)-4-amino-5-oxopentanoate = 5-aminolevulinate. Its pathway is porphyrin-containing compound metabolism; protoporphyrin-IX biosynthesis; 5-aminolevulinate from L-glutamyl-tRNA(Glu): step 2/2. The polypeptide is Glutamate-1-semialdehyde 2,1-aminomutase (Vibrio cholerae serotype O1 (strain ATCC 39541 / Classical Ogawa 395 / O395)).